Consider the following 197-residue polypeptide: Penicillin-binding protein activator LpoB (197 aa).

The first 17 residues, 1–17 (MIKRMSGIALAALLLSG), serve as a signal peptide directing secretion. Cysteine 18 is lipidated: N-palmitoyl cysteine. Cysteine 18 carries S-diacylglycerol cysteine lipidation. The interval 23-57 (PRGETPSQPPAPTTPAKPSVVPTPTPPVVTPVPQP) is disordered. Residues 29–57 (SQPPAPTTPAKPSVVPTPTPPVVTPVPQP) are compositionally biased toward pro residues.

The protein belongs to the LpoB family. Interacts with PBP1b.

Its subcellular location is the cell outer membrane. Regulator of peptidoglycan synthesis that is essential for the function of penicillin-binding protein 1B (PBP1b). This is Penicillin-binding protein activator LpoB from Edwardsiella piscicida.